The primary structure comprises 658 residues: L-type lectin-domain containing receptor kinase V.4 (658 aa).

An N-terminal signal peptide occupies residues 1–25; that stretch reads MSRTIGSRVIFLILALFCCTENSRG. The segment at 26–248 is legume-lectin like; that stretch reads KLVMQGSAGF…RAMHYMLSWF (223 aa). Over 26–280 the chain is Extracellular; it reads KLVMQGSAGF…EKSLVYRIVL (255 aa). Asn66 and Asn196 each carry an N-linked (GlcNAc...) asparagine glycan. A helical membrane pass occupies residues 281 to 301; the sequence is VTSLALVLFVALVASALSIFF. Residues 302–658 are Cytoplasmic-facing; that stretch reads YRRHKKVKEV…LTEPFTSRGR (357 aa). The region spanning 334–592 is the Protein kinase domain; that stretch reads KGFKQLLGKG…LGVLCSHQAV (259 aa). ATP-binding positions include 340–348 and Lys363; that span reads LGKGGFGQV. The active-site Proton acceptor is the Asp460.

It in the C-terminal section; belongs to the protein kinase superfamily. Ser/Thr protein kinase family. This sequence in the N-terminal section; belongs to the leguminous lectin family.

It is found in the cell membrane. The enzyme catalyses L-seryl-[protein] + ATP = O-phospho-L-seryl-[protein] + ADP + H(+). It carries out the reaction L-threonyl-[protein] + ATP = O-phospho-L-threonyl-[protein] + ADP + H(+). Functionally, involved in resistance response to the pathogenic oomycetes Phytophthora infestans and Phytophthora capsici and to the pathogenic bacteria Pseudomonas syringae. This Arabidopsis thaliana (Mouse-ear cress) protein is L-type lectin-domain containing receptor kinase V.4.